A 345-amino-acid chain; its full sequence is MTDKTSLSYKDAGVDIDAGNALVDRIKGVVKQTKRPEVMGGLGGFGALCALPQKYREPILVSGTDGVGTKLRLAMDLKRHDTIGIDLVAMCVNDLVVQGAEPLFFLDYYATGKLDVDTAAAVITGIAEGCKQSGCALVGGETAEMPGMYHGEDYDVAGFCVGVVEKADIIDGSKVQAGDTLLALAASGPHSNGYSLVRKILSFSQTDPEQTQVEGKSLADHLLAPTCIYVKALLSLIAQTEVHAIAHLTGGGFWENIPRVLPAGTQAVIDKNSWQWPAVFRWLQQAGNVSRHEMYRTFNCGVGMVIAVPADSTAKALAILADLGETAWVLGQIHPADGEHQVIIR.

This sequence belongs to the AIR synthase family.

It is found in the cytoplasm. The enzyme catalyses 2-formamido-N(1)-(5-O-phospho-beta-D-ribosyl)acetamidine + ATP = 5-amino-1-(5-phospho-beta-D-ribosyl)imidazole + ADP + phosphate + H(+). Its pathway is purine metabolism; IMP biosynthesis via de novo pathway; 5-amino-1-(5-phospho-D-ribosyl)imidazole from N(2)-formyl-N(1)-(5-phospho-D-ribosyl)glycinamide: step 2/2. The sequence is that of Phosphoribosylformylglycinamidine cyclo-ligase from Sodalis glossinidius (strain morsitans).